The following is a 317-amino-acid chain: MATH domain and coiled-coil domain-containing protein At3g58240 (317 aa).

Residues 6–131 form the MATH domain; sequence DNKFTWVIKN…DGEVEIVAQI (126 aa). The stretch at 254-305 forms a coiled coil; sequence KLDWLEKKLDEVKEIKKKCERVTEMEKELHDLMNKHTNVSKLLEKEKLEIKN.

In Arabidopsis thaliana (Mouse-ear cress), this protein is MATH domain and coiled-coil domain-containing protein At3g58240.